Consider the following 168-residue polypeptide: ATP synthase F(1) complex subunit delta, mitochondrial (168 aa).

A mitochondrion-targeting transit peptide spans 1–22; that stretch reads MLPSALLRRPGLGRLVRQVRLY. N6-acetyllysine; alternate is present on residues Lys-136 and Lys-165. 2 positions are modified to N6-succinyllysine; alternate: Lys-136 and Lys-165.

The protein belongs to the ATPase epsilon chain family. As to quaternary structure, component of the ATP synthase complex composed at least of ATP5F1A/subunit alpha, ATP5F1B/subunit beta, ATP5MC1/subunit c (homooctomer), MT-ATP6/subunit a, MT-ATP8/subunit 8, ATP5ME/subunit e, ATP5MF/subunit f, ATP5MG/subunit g, ATP5MK/subunit k, ATP5MJ/subunit j, ATP5F1C/subunit gamma, ATP5F1D/subunit delta, ATP5F1E/subunit epsilon, ATP5PF/subunit F6, ATP5PB/subunit b, ATP5PD/subunit d, ATP5PO/subunit OSCP. ATP synthase complex consists of a soluble F(1) head domain (subunits alpha(3) and beta(3)) - the catalytic core - and a membrane F(0) domain - the membrane proton channel (subunits c, a, 8, e, f, g, k and j). These two domains are linked by a central stalk (subunits gamma, delta, and epsilon) rotating inside the F1 region and a stationary peripheral stalk (subunits F6, b, d, and OSCP). Component of a complex composed at least by ATPIF1, ATP5F1A, ATP5F1B, ATP5F1C AND ATP5F1E.

It localises to the mitochondrion. The protein localises to the mitochondrion inner membrane. Subunit delta, of the mitochondrial membrane ATP synthase complex (F(1)F(0) ATP synthase or Complex V) that produces ATP from ADP in the presence of a proton gradient across the membrane which is generated by electron transport complexes of the respiratory chain. ATP synthase complex consist of a soluble F(1) head domain - the catalytic core - and a membrane F(1) domain - the membrane proton channel. These two domains are linked by a central stalk rotating inside the F(1) region and a stationary peripheral stalk. During catalysis, ATP synthesis in the catalytic domain of F(1) is coupled via a rotary mechanism of the central stalk subunits to proton translocation. In vivo, can only synthesize ATP although its ATP hydrolase activity can be activated artificially in vitro. With the central stalk subunit gamma, is essential for the biogenesis of F(1) catalytic part of the ATP synthase complex namely in the formation of F1 assembly intermediate. This is ATP synthase F(1) complex subunit delta, mitochondrial from Bos taurus (Bovine).